A 245-amino-acid polypeptide reads, in one-letter code: Orotidine 5'-phosphate decarboxylase (245 aa).

Residues aspartate 22, lysine 44, 71 to 80 (DLKFHDIPNT), threonine 131, arginine 192, glutamine 201, glycine 221, and arginine 222 each bind substrate. Lysine 73 serves as the catalytic Proton donor.

The protein belongs to the OMP decarboxylase family. Type 1 subfamily. In terms of assembly, homodimer.

The catalysed reaction is orotidine 5'-phosphate + H(+) = UMP + CO2. The protein operates within pyrimidine metabolism; UMP biosynthesis via de novo pathway; UMP from orotate: step 2/2. Functionally, catalyzes the decarboxylation of orotidine 5'-monophosphate (OMP) to uridine 5'-monophosphate (UMP). In Escherichia fergusonii (strain ATCC 35469 / DSM 13698 / CCUG 18766 / IAM 14443 / JCM 21226 / LMG 7866 / NBRC 102419 / NCTC 12128 / CDC 0568-73), this protein is Orotidine 5'-phosphate decarboxylase.